A 293-amino-acid chain; its full sequence is Rhomboid-like protease 1 (293 aa).

The segment at 18 to 40 (EHTPLYNAETGSRDSDSTSSGGA) is disordered. 6 helical membrane passes run 62–82 (VVLAISIVDWIFYIVTVCLDT), 112–132 (LLLPVFLHANFFHVFFNVFFQ), 148–168 (FTGLYFASAIYGNLLSATAFF), 174–194 (VGASTAGFGLIGIQICEMALT), 217–237 (LLMFTLNGGSIDQMGHLGGLL), and 262–282 (AAAIGILLALPAACFPILYAV). The active-site Nucleophile is serine 177. Histidine 232 is an active-site residue.

The protein belongs to the peptidase S54 family.

Its subcellular location is the cytoplasmic vesicle. It localises to the secretory vesicle. The protein resides in the microneme membrane. The enzyme catalyses Cleaves type-1 transmembrane domains using a catalytic dyad composed of serine and histidine that are contributed by different transmembrane domains.. In terms of biological role, serine protease involved in intramembrane proteolysis and the subsequent release of polypeptides from their membrane anchors. Has no detectable activity towards MIC2. The polypeptide is Rhomboid-like protease 1 (ROM1) (Toxoplasma gondii).